Here is a 177-residue protein sequence, read N- to C-terminus: UPF0251 protein Cag_0886 (177 aa).

Residues 147 to 177 (GGCLSDEESDEQENEQRTVGYPESEEELEIE) form a disordered region.

This sequence belongs to the UPF0251 family.

The sequence is that of UPF0251 protein Cag_0886 from Chlorobium chlorochromatii (strain CaD3).